Consider the following 348-residue polypeptide: Zinc transporter ZIP13 (348 aa).

Topologically, residues 1–45 (MMIQTAVAQAKTAPAGPGPWSIKDLVDLQYLDELMSIDNLDVWFC) are cytoplasmic. A helical transmembrane segment spans residues 46–66 (SLVGSIAIGLSGIFPLLVIPI). The Lumenal segment spans residues 67–83 (EAGTALKTEAGCQKLKK). A helical transmembrane segment spans residues 84–104 (LLSFAIGGLLGDVFLHLLPEA). Over 105-118 (WAYTSSPGGSHRHY) the chain is Cytoplasmic. A helical membrane pass occupies residues 119–139 (CTQGLWVIGGLMSFLTLEKMF). The Lumenal portion of the chain corresponds to 140-219 (PDEVGDPETK…CIDNFTHGLA (80 aa)). Positions 144–192 (GDPETKTSFQRTTSSSSDLSSQFSVSPQTNGICSNNNSDSKPKTDISPY) are disordered. A compositionally biased stretch (low complexity) spans 149–169 (KTSFQRTTSSSSDLSSQFSVS). The segment covering 170–182 (PQTNGICSNNNSD) has biased composition (polar residues). The helical transmembrane segment at 220 to 240 (VAGSFLVSRKVGFLTTFAILL) threads the bilayer. An XEXPHE-motif motif is present at residues 241–246 (HEIPHE). Over 241–262 (HEIPHEVGDFAILLRAGFDRWK) the chain is Cytoplasmic. The helical transmembrane segment at 263 to 283 (AARMQLSTALGGVLGACFALC) threads the bilayer. The Lumenal portion of the chain corresponds to 284–294 (SQSQHGAENAT). The chain crosses the membrane as a helical span at residues 295–315 (TWILPFTSGGFLYIALVNVVP). Topologically, residues 316 to 326 (DLLEETNPRNS) are cytoplasmic. The helical transmembrane segment at 327-347 (LLQVLLLFSGIGVMALLSIAM) threads the bilayer. A topological domain (lumenal) is located at residue D348.

Belongs to the ZIP transporter (TC 2.A.5) family. In terms of assembly, homodimer.

The protein resides in the golgi apparatus membrane. The protein localises to the cytoplasmic vesicle membrane. Its subcellular location is the endoplasmic reticulum membrane. It catalyses the reaction Zn(2+)(in) = Zn(2+)(out). Its function is as follows. Functions as a zinc transporter transporting Zn(2+) from the Golgi apparatus to the cytosol and thus influences the zinc level at least in areas of the cytosol. In Danio rerio (Zebrafish), this protein is Zinc transporter ZIP13.